Consider the following 250-residue polypeptide: LOB domain-containing protein 37 (250 aa).

The LOB domain occupies 1–107 (MSCNGCRVLR…VETVLRGGSL (107 aa)). The segment at 145 to 227 (DSTDRNIYHH…DSGTTTTTTA (83 aa)) is disordered. Low complexity predominate over residues 157–170 (FSSSRSRSTMDSSS).

This sequence belongs to the LOB domain-containing protein family. As to expression, expressed in young shoots, roots, stems, leaves and flowers.

The sequence is that of LOB domain-containing protein 37 (LBD37) from Arabidopsis thaliana (Mouse-ear cress).